Here is a 120-residue protein sequence, read N- to C-terminus: Large ribosomal subunit protein uL18 (120 aa).

The protein belongs to the universal ribosomal protein uL18 family. As to quaternary structure, part of the 50S ribosomal subunit; part of the 5S rRNA/L5/L18/L25 subcomplex. Contacts the 5S and 23S rRNAs.

In terms of biological role, this is one of the proteins that bind and probably mediate the attachment of the 5S RNA into the large ribosomal subunit, where it forms part of the central protuberance. This chain is Large ribosomal subunit protein uL18, found in Bradyrhizobium sp. (strain BTAi1 / ATCC BAA-1182).